The following is a 229-amino-acid chain: Ribulose-phosphate 3-epimerase (229 aa).

Ser13 is a binding site for substrate. His36, Asp38, and His69 together coordinate a divalent metal cation. Asp38 (proton acceptor) is an active-site residue. Substrate is bound by residues His69, 145–148 (GFGG), 178–180 (DGG), and 200–201 (GS). Asp178 serves as a coordination point for a divalent metal cation. Asp178 acts as the Proton donor in catalysis.

This sequence belongs to the ribulose-phosphate 3-epimerase family. The cofactor is a divalent metal cation.

The enzyme catalyses D-ribulose 5-phosphate = D-xylulose 5-phosphate. The protein operates within carbohydrate degradation. In terms of biological role, catalyzes the reversible epimerization of D-ribulose 5-phosphate to D-xylulose 5-phosphate. The protein is Ribulose-phosphate 3-epimerase of Mycobacterium bovis (strain ATCC BAA-935 / AF2122/97).